The chain runs to 1053 residues: Carbamoyl phosphate synthase large chain (1053 aa).

Positions 1-397 (MPKRTDIKKV…SFMKAKRSID (397 aa)) are carboxyphosphate synthetic domain. ATP is bound by residues Arg127, Arg167, Gly173, Gly174, Glu206, Val208, Glu213, Gly239, Ile240, His241, Gln282, and Glu294. Residues 131–323 (RDLMNEIGEP…IARVAAKIAI (193 aa)) form the ATP-grasp 1 domain. Mg(2+)-binding residues include Gln282, Glu294, and Asn296. Residues Gln282, Glu294, and Asn296 each contribute to the Mn(2+) site. Positions 398–530 (TDVRTHTSPS…YSTREGTSEI (133 aa)) are oligomerization domain. Residues 531–919 (VRDKKQKILI…YKACISADNE (389 aa)) form a carbamoyl phosphate synthetic domain region. One can recognise an ATP-grasp 2 domain in the interval 661 to 852 (SVLLTTLQIP…IAKIAAKVMI (192 aa)). ATP contacts are provided by Arg697, Ser736, Leu738, Glu743, Gly768, Ile769, His770, Ser771, Gln811, and Glu823. 3 residues coordinate Mg(2+): Gln811, Glu823, and Asn825. 3 residues coordinate Mn(2+): Gln811, Glu823, and Asn825. Positions 918–1053 (NELPLKGNVF…TLEPLSHYLR (136 aa)) constitute an MGS-like domain. The allosteric domain stretch occupies residues 920 to 1053 (LPLKGNVFVS…TLEPLSHYLR (134 aa)).

It belongs to the CarB family. In terms of assembly, composed of two chains; the small (or glutamine) chain promotes the hydrolysis of glutamine to ammonia, which is used by the large (or ammonia) chain to synthesize carbamoyl phosphate. Tetramer of heterodimers (alpha,beta)4. Mg(2+) is required as a cofactor. It depends on Mn(2+) as a cofactor.

It catalyses the reaction hydrogencarbonate + L-glutamine + 2 ATP + H2O = carbamoyl phosphate + L-glutamate + 2 ADP + phosphate + 2 H(+). It carries out the reaction hydrogencarbonate + NH4(+) + 2 ATP = carbamoyl phosphate + 2 ADP + phosphate + 2 H(+). Its pathway is amino-acid biosynthesis; L-arginine biosynthesis; carbamoyl phosphate from bicarbonate: step 1/1. The protein operates within pyrimidine metabolism; UMP biosynthesis via de novo pathway; (S)-dihydroorotate from bicarbonate: step 1/3. In terms of biological role, large subunit of the glutamine-dependent carbamoyl phosphate synthetase (CPSase). CPSase catalyzes the formation of carbamoyl phosphate from the ammonia moiety of glutamine, carbonate, and phosphate donated by ATP, constituting the first step of 2 biosynthetic pathways, one leading to arginine and/or urea and the other to pyrimidine nucleotides. The large subunit (synthetase) binds the substrates ammonia (free or transferred from glutamine from the small subunit), hydrogencarbonate and ATP and carries out an ATP-coupled ligase reaction, activating hydrogencarbonate by forming carboxy phosphate which reacts with ammonia to form carbamoyl phosphate. This Methanoregula boonei (strain DSM 21154 / JCM 14090 / 6A8) protein is Carbamoyl phosphate synthase large chain.